Consider the following 311-residue polypeptide: MVVWIRGDRLHAETLQWARRHVEELERFGVTPKLAVLLLNDDPVELETQRRYVSLKAKDVRSIGGEVEIYELYKEPPERREAAALRLIERLNNADDVTGVLIQKPLPPYIDEGRLFERLSPIKDVDGLTPENKKRLVAGFDLDRDILPCTPAGILELFRQYQVEVRGRDVVVVGKGTLVGFPLSIMLMQMDATVTTLHALSKDRAYYTRKADIVISAVGRPPELYGDNPWRLTGDMIKEGAVVVGVGGKVDPATKRWYFDVDENSVAEKASYLTPNIGGVGLATRARLVKNLIITTYMVLTRVTSPRLLSL.

Residue 174 to 176 (GKG) participates in NADP(+) binding.

The protein belongs to the tetrahydrofolate dehydrogenase/cyclohydrolase family. Homodimer.

It carries out the reaction (6R)-5,10-methylene-5,6,7,8-tetrahydrofolate + NADP(+) = (6R)-5,10-methenyltetrahydrofolate + NADPH. The catalysed reaction is (6R)-5,10-methenyltetrahydrofolate + H2O = (6R)-10-formyltetrahydrofolate + H(+). The protein operates within one-carbon metabolism; tetrahydrofolate interconversion. Catalyzes the oxidation of 5,10-methylenetetrahydrofolate to 5,10-methenyltetrahydrofolate and then the hydrolysis of 5,10-methenyltetrahydrofolate to 10-formyltetrahydrofolate. The sequence is that of Bifunctional protein FolD from Pyrobaculum neutrophilum (strain DSM 2338 / JCM 9278 / NBRC 100436 / V24Sta) (Thermoproteus neutrophilus).